A 253-amino-acid chain; its full sequence is Zinc finger protein GIS (253 aa).

Residues M1–T10 are compositionally biased toward acidic residues. Residues M1 to I85 form a disordered region. Composition is skewed to polar residues over residues Q11–Q21, S49–T63, and G76–I85. The C2H2-type zinc-finger motif lies at F91–H113.

As to expression, expressed in inflorescence meristems, floral meristems and stem epidermis.

It localises to the nucleus. Probable transcription factor required for the initiation of inflorescence trichomes in response to gibberellin (GA). Mediates the induction of GL1 expression by GA in inflorescence organs and is antagonized in its action by the DELLA repressor GAI. Acts upstream of the trichome initiation regulators GL1 and GL3, and downstream of the GA signaling repressor SPINDLY (SPY). Does not play a significant role in the cytokinin response. Controls trichome branching through GA signaling. Acts downstream of the key regulator STICHEL (STI) in an endoreduplication-independent pathway. Controls trichome cell division indirectly by acting downstream of a key endoreduplication regulator SIAMESE (SIM). In Arabidopsis thaliana (Mouse-ear cress), this protein is Zinc finger protein GIS (GIS).